The primary structure comprises 780 residues: TSC22 domain family protein 2 (780 aa).

Disordered stretches follow at residues 20–86, 126–158, 235–499, 587–607, and 736–780; these read AQVA…TVSP, TSAPAPGAPGGPQLAGSSAGPVTAAPSQPPTTC, AHGP…PGGP, LVGQVDDTRRKSEPLPQPPLS, and LSSN…VSSA. Positions 28 to 37 are enriched in acidic residues; the sequence is EDTESLDDPD. Residues 126–146 show a composition bias toward low complexity; the sequence is TSAPAPGAPGGPQLAGSSAGP. Positions 241–262 are enriched in polar residues; that stretch reads GTDSSLTAVSQLPPSEKMSQPT. 3 stretches are compositionally biased toward low complexity: residues 297–316, 344–361, and 395–412; these read GAATGPQPMMAAAQPSQPQG, PAVGAPAAQQPQQFAYPQ, and QPSSTGAAASPATAATLP. Polar residues predominate over residues 415-434; the sequence is TGQNASSVGAQLMGASSQPS. The segment covering 453–468 has biased composition (low complexity); that stretch reads QPTGVPPATVGGVVQP. Polar residues predominate over residues 736 to 756; that stretch reads LSSNDQLSQLPTQQANPGSTS. A compositionally biased stretch (pro residues) spans 765-774; it reads PPQPTQPPQQ.

Belongs to the TSC-22/Dip/Bun family. As to quaternary structure, interacts with NRBP1. Interacts with PKM isoform M2; the interaction results in reduced nuclear levels of PKM isoform M2, leading to repression of cyclin CCND1 transcription and reduced cell growth. Interacts with WDR77.

Its function is as follows. Reduces the level of nuclear PKM isoform M2 which results in repression of cyclin CCND1 transcription and reduced cell growth. The polypeptide is TSC22 domain family protein 2 (Homo sapiens (Human)).